A 456-amino-acid polypeptide reads, in one-letter code: FAD-dependent monooxygenase sor5 (456 aa).

The chain crosses the membrane as a helical span at residues 18–38; the sequence is PLEVAIVGGGLTGLALALGLL. The N-linked (GlcNAc...) asparagine glycan is linked to asparagine 43. The FAD site is built by glutamate 48 and arginine 119. Arginine 200 is a catalytic residue. Positions 331 and 344 each coordinate FAD.

The protein belongs to the paxM FAD-dependent monooxygenase family. FAD is required as a cofactor.

The protein resides in the membrane. It functions in the pathway secondary metabolite biosynthesis. In terms of biological role, FAD-dependent monooxygenase; part of the SOR gene cluster that mediates the biosynthesis of sorbicillinoids, a diverse group of yellow secondary metabolites that restrict growth of competing pathogenic fungi but not of bacteria. Sorbicillinoids biosynthesis requires the action of two PKSs. The SOR cluster is required for the production of trichodimerol and dihydrotrichotetronin, with sor2 being sufficient for production of trichodimerol, but not dihydrotrichotetronin in the light. Sor1 iteratively combines three acetyl units and the growing chain is modified by the ketoacyl reductase subunit, and optional by the enoyl reductase subunit in the second cycle. The polyketide is then handed over to the PKS sor2, which adds three more acetyl units, and two methyl groups. Sor2 releases an aldehyde, which undergoes spontaneous cyclization resulting in the formation of sorbicillin or 2',3'-dihydrosorbicillin. The monooxygenase sor5 oxidizes sorbicillin and 2',3'-dihydrosorbicillin to 2',3'-dihydrosorbicillinol and sorbicillinol, respectively. The oxidoreductase sor8 further converts sorbicillinol into oxosorbicillinol. Sorbicillinol is the building block for the other sorbicillinoids such as disorbicillinol, bisvertinolon, dihydrobisvertinolone, and dihydrotrichotetronine. In Hypocrea jecorina (strain QM6a) (Trichoderma reesei), this protein is FAD-dependent monooxygenase sor5.